Consider the following 187-residue polypeptide: Elongation factor P (187 aa).

The protein belongs to the elongation factor P family.

It localises to the cytoplasm. Its pathway is protein biosynthesis; polypeptide chain elongation. Functionally, involved in peptide bond synthesis. Stimulates efficient translation and peptide-bond synthesis on native or reconstituted 70S ribosomes in vitro. Probably functions indirectly by altering the affinity of the ribosome for aminoacyl-tRNA, thus increasing their reactivity as acceptors for peptidyl transferase. The protein is Elongation factor P of Mycobacteroides abscessus (strain ATCC 19977 / DSM 44196 / CCUG 20993 / CIP 104536 / JCM 13569 / NCTC 13031 / TMC 1543 / L948) (Mycobacterium abscessus).